The chain runs to 554 residues: Valerianol synthase TPS1E (554 aa).

Mg(2+) is bound by residues Asp307 and Asp311. The DDXXD motif motif lies at 326 to 330 (VQRWD). Residues Asp452, Ser456, and Glu460 each contribute to the Mg(2+) site.

Belongs to the terpene synthase family. Mg(2+) serves as cofactor.

The enzyme catalyses (2E,6E)-farnesyl diphosphate + H2O = valerianol + diphosphate. Its pathway is secondary metabolite biosynthesis; terpenoid biosynthesis. In terms of biological role, terpene synthase that catalyzes the biosynthesis of the terpene valerianol, which is a volatile compound of floral scent. In Camellia hiemalis (Camellia), this protein is Valerianol synthase TPS1E.